A 478-amino-acid chain; its full sequence is Protein nucleotidyltransferase YdiU (478 aa).

Residues Gly84, Gly86, Arg87, Lys107, Asp119, Gly120, Arg170, and Arg177 each contribute to the ATP site. The active-site Proton acceptor is Asp246. Mg(2+)-binding residues include Asn247 and Asp256. Asp256 is a binding site for ATP.

It belongs to the SELO family. Mg(2+) serves as cofactor. Mn(2+) is required as a cofactor.

The enzyme catalyses L-seryl-[protein] + ATP = 3-O-(5'-adenylyl)-L-seryl-[protein] + diphosphate. It catalyses the reaction L-threonyl-[protein] + ATP = 3-O-(5'-adenylyl)-L-threonyl-[protein] + diphosphate. The catalysed reaction is L-tyrosyl-[protein] + ATP = O-(5'-adenylyl)-L-tyrosyl-[protein] + diphosphate. It carries out the reaction L-histidyl-[protein] + UTP = N(tele)-(5'-uridylyl)-L-histidyl-[protein] + diphosphate. The enzyme catalyses L-seryl-[protein] + UTP = O-(5'-uridylyl)-L-seryl-[protein] + diphosphate. It catalyses the reaction L-tyrosyl-[protein] + UTP = O-(5'-uridylyl)-L-tyrosyl-[protein] + diphosphate. Functionally, nucleotidyltransferase involved in the post-translational modification of proteins. It can catalyze the addition of adenosine monophosphate (AMP) or uridine monophosphate (UMP) to a protein, resulting in modifications known as AMPylation and UMPylation. This is Protein nucleotidyltransferase YdiU from Escherichia coli (strain SE11).